A 187-amino-acid polypeptide reads, in one-letter code: Orotate phosphoribosyltransferase (187 aa).

5-phospho-alpha-D-ribose 1-diphosphate is bound by residues Arg-98, Lys-99, Lys-102, His-104, and 128 to 136 (EDVTTTGGS). The orotate site is built by Thr-132 and Arg-160.

Belongs to the purine/pyrimidine phosphoribosyltransferase family. PyrE subfamily. As to quaternary structure, homodimer. It depends on Mg(2+) as a cofactor.

It catalyses the reaction orotidine 5'-phosphate + diphosphate = orotate + 5-phospho-alpha-D-ribose 1-diphosphate. It participates in pyrimidine metabolism; UMP biosynthesis via de novo pathway; UMP from orotate: step 1/2. Its function is as follows. Catalyzes the transfer of a ribosyl phosphate group from 5-phosphoribose 1-diphosphate to orotate, leading to the formation of orotidine monophosphate (OMP). The polypeptide is Orotate phosphoribosyltransferase (Rhodopseudomonas palustris (strain BisB18)).